The following is a 511-amino-acid chain: GMP synthase [glutamine-hydrolyzing] (511 aa).

The region spanning 5 to 195 (DILVLDFGSQ…AKYACNCDSV (191 aa)) is the Glutamine amidotransferase type-1 domain. Cysteine 82 serves as the catalytic Nucleophile. Residues histidine 169 and glutamate 171 contribute to the active site. The GMPS ATP-PPase domain occupies 196-386 (WNMGSFAKTQ…LGLSKDVVYR (191 aa)). 223–229 (SGGVDSS) provides a ligand contact to ATP.

Homodimer.

The enzyme catalyses XMP + L-glutamine + ATP + H2O = GMP + L-glutamate + AMP + diphosphate + 2 H(+). Its pathway is purine metabolism; GMP biosynthesis; GMP from XMP (L-Gln route): step 1/1. Functionally, catalyzes the synthesis of GMP from XMP. This Campylobacter lari (strain RM2100 / D67 / ATCC BAA-1060) protein is GMP synthase [glutamine-hydrolyzing].